Reading from the N-terminus, the 156-residue chain is Small ribosomal subunit protein uS7 (156 aa).

The protein belongs to the universal ribosomal protein uS7 family. As to quaternary structure, part of the 30S ribosomal subunit. Contacts proteins S9 and S11.

In terms of biological role, one of the primary rRNA binding proteins, it binds directly to 16S rRNA where it nucleates assembly of the head domain of the 30S subunit. Is located at the subunit interface close to the decoding center, probably blocks exit of the E-site tRNA. In Beijerinckia indica subsp. indica (strain ATCC 9039 / DSM 1715 / NCIMB 8712), this protein is Small ribosomal subunit protein uS7.